We begin with the raw amino-acid sequence, 205 residues long: Adenylyl-sulfate kinase (205 aa).

31 to 38 serves as a coordination point for ATP; it reads GLSGAGKS. Ser105 (phosphoserine intermediate) is an active-site residue.

This sequence belongs to the APS kinase family.

The catalysed reaction is adenosine 5'-phosphosulfate + ATP = 3'-phosphoadenylyl sulfate + ADP + H(+). Its pathway is sulfur metabolism; hydrogen sulfide biosynthesis; sulfite from sulfate: step 2/3. Functionally, catalyzes the synthesis of activated sulfate. In Shewanella oneidensis (strain ATCC 700550 / JCM 31522 / CIP 106686 / LMG 19005 / NCIMB 14063 / MR-1), this protein is Adenylyl-sulfate kinase.